Consider the following 155-residue polypeptide: Aspartate carbamoyltransferase regulatory chain (155 aa).

Residues Cys112, Cys117, Cys140, and Cys143 each coordinate Zn(2+).

This sequence belongs to the PyrI family. In terms of assembly, contains catalytic and regulatory chains. It depends on Zn(2+) as a cofactor.

Functionally, involved in allosteric regulation of aspartate carbamoyltransferase. The protein is Aspartate carbamoyltransferase regulatory chain of Phocaeicola vulgatus (strain ATCC 8482 / DSM 1447 / JCM 5826 / CCUG 4940 / NBRC 14291 / NCTC 11154) (Bacteroides vulgatus).